Here is a 948-residue protein sequence, read N- to C-terminus: Putative helicase 009L (948 aa).

Residues Leu-64–Gln-243 enclose the Helicase ATP-binding domain. ATP is bound at residue His-77 to Thr-84. The short motif at Asp-187–His-190 is the DEAH box element. Positions Val-371 to Ala-554 constitute a Helicase C-terminal domain.

The protein is Putative helicase 009L of Frog virus 3 (isolate Goorha) (FV-3).